The sequence spans 344 residues: [LysW]-L-2-aminoadipate 6-phosphate reductase (344 aa).

NADP(+) is bound by residues 12–15, 36–38, and L75; these read SGYA and SRR. C148 is an active-site residue. Residues S180, A184, and N312 each contribute to the NADP(+) site.

This sequence belongs to the NAGSA dehydrogenase family. Type 1 subfamily. LysY sub-subfamily. Homotetramer. Interacts with LysW. May form a ternary complex with LysW and LysZ.

It is found in the cytoplasm. It carries out the reaction [amino-group carrier protein]-C-terminal-N-(1-carboxy-5-oxopentan-1-yl)-L-glutamine + phosphate + NADP(+) = [amino-group carrier protein]-C-terminal-N-(1-carboxy-5-phosphooxy-5-oxopentan-1-yl)-L-glutamine + NADPH + H(+). Its pathway is amino-acid biosynthesis; L-lysine biosynthesis via AAA pathway; L-lysine from L-alpha-aminoadipate (Thermus route): step 3/5. Functionally, catalyzes the NADPH-dependent reduction of [LysW]-aminoadipate 6-phosphate to yield [LysW]-aminoadipate 6-semialdehyde. The protein is [LysW]-L-2-aminoadipate 6-phosphate reductase of Thermus thermophilus (strain ATCC BAA-163 / DSM 7039 / HB27).